Consider the following 117-residue polypeptide: Virion membrane protein A21 (117 aa).

The chain crosses the membrane as a helical; Signal-anchor for type III membrane protein span at residues 1–21; it reads MITLFLILCYFILIFNIIVPA. Topologically, residues 22–117 are virion surface; sequence ISEKMRRERA…RAYSDLFFTT (96 aa).

This sequence belongs to the chordopoxvirinae A21 family. Envelope protein part of a stable entry-fusion complex (EFC) which is at least composed of proteins A16, A21, A28, G3, G9, H2, J5, and L5. Formation of the viral membrane is necessary for the assembly of the complex. In terms of processing, contains two intramolecular disulfide bonds. They are created by the viral disulfide bond formation pathway, a poxvirus-specific pathway that operates on the cytoplasmic side of the MV membranes.

The protein localises to the virion membrane. Its function is as follows. Envelope protein part of the entry-fusion complex responsible for the virus membrane fusion with host cell membrane during virus entry. The polypeptide is Virion membrane protein A21 (Vaccinia virus (strain Ankara) (VACV)).